The chain runs to 362 residues: MQPTLFIDRDGTLIDEPKTDFQIDSLEKLKLEPKVIPALLRLKAKYRFVIVSNQDGLGTDAFPQTNFDKPHNVMMALFESQGITFDEVLICPHKPEENCLCRKPKIKLLDHYIRKNLFDIDRSFVIGDRETDVQLAENLGIRAIQYDPQKMNWDLIAEKLLGETVTNCGKRPPRFAEVIRQTKETDIKVQIWLDEAGVNEIKTGVGFFDHMLDQIATHGGFRMNVQCKGDLWIDEHHTVEDTALALGQALKQAIGDKRGIARFGFVLPMDECKAECALDLSGRPWIKFNACFKRDKVGDFSTELTEHFFQSLAFSMLATIHLNVTGNNDHHKIESLFKAFGRTLRQAIRIEGNEMPSSKGVL.

Residues 1 to 173 (MQPTLFIDRD…TVTNCGKRPP (173 aa)) form a histidinol-phosphatase region. Aspartate 8 (nucleophile) is an active-site residue. Positions 8 and 10 each coordinate Mg(2+). Aspartate 10 (proton donor) is an active-site residue. Positions 91, 93, 99, and 101 each coordinate Zn(2+). Mg(2+) is bound at residue aspartate 128. The interval 174–362 (RFAEVIRQTK…NEMPSSKGVL (189 aa)) is imidazoleglycerol-phosphate dehydratase.

This sequence in the N-terminal section; belongs to the histidinol-phosphatase family. It in the C-terminal section; belongs to the imidazoleglycerol-phosphate dehydratase family. The cofactor is Mg(2+). Zn(2+) serves as cofactor.

The protein localises to the cytoplasm. The enzyme catalyses D-erythro-1-(imidazol-4-yl)glycerol 3-phosphate = 3-(imidazol-4-yl)-2-oxopropyl phosphate + H2O. It catalyses the reaction L-histidinol phosphate + H2O = L-histidinol + phosphate. It participates in amino-acid biosynthesis; L-histidine biosynthesis; L-histidine from 5-phospho-alpha-D-ribose 1-diphosphate: step 6/9. The protein operates within amino-acid biosynthesis; L-histidine biosynthesis; L-histidine from 5-phospho-alpha-D-ribose 1-diphosphate: step 8/9. This Haemophilus influenzae (strain 86-028NP) protein is Histidine biosynthesis bifunctional protein HisB.